The chain runs to 106 residues: Protein translocase subunit SecE (106 aa).

A run of 2 helical transmembrane segments spans residues 20–40 (LPIRVIGMAIALVIAFILAAI) and 75–95 (IVIGVTMIASLFFWAVDSIIV).

It belongs to the SecE/SEC61-gamma family. Component of the Sec protein translocase complex. Heterotrimer consisting of SecY, SecE and SecG subunits. The heterotrimers can form oligomers, although 1 heterotrimer is thought to be able to translocate proteins. Interacts with the ribosome. Interacts with SecDF, and other proteins may be involved. Interacts with SecA.

The protein resides in the cell inner membrane. Its function is as follows. Essential subunit of the Sec protein translocation channel SecYEG. Clamps together the 2 halves of SecY. May contact the channel plug during translocation. The sequence is that of Protein translocase subunit SecE from Haemophilus influenzae (strain ATCC 51907 / DSM 11121 / KW20 / Rd).